The sequence spans 437 residues: Glycogen synthase (437 aa).

ADP-alpha-D-glucose is bound at residue Lys-15.

It belongs to the glycosyltransferase 1 family. Bacterial/plant glycogen synthase subfamily.

The enzyme catalyses [(1-&gt;4)-alpha-D-glucosyl](n) + ADP-alpha-D-glucose = [(1-&gt;4)-alpha-D-glucosyl](n+1) + ADP + H(+). The protein operates within glycan biosynthesis; glycogen biosynthesis. Its function is as follows. Synthesizes alpha-1,4-glucan chains using ADP-glucose. This is Glycogen synthase from Thermus thermophilus (strain ATCC 27634 / DSM 579 / HB8).